The sequence spans 61 residues: Large ribosomal subunit protein bL32 (61 aa).

Over residues 1 to 18 (MAIVPKRKTSKQRKRKRQ) the composition is skewed to basic residues. Positions 1 to 20 (MAIVPKRKTSKQRKRKRQTH) are disordered.

Belongs to the bacterial ribosomal protein bL32 family.

In Mycoplasmopsis pulmonis (strain UAB CTIP) (Mycoplasma pulmonis), this protein is Large ribosomal subunit protein bL32 (rpmF).